The sequence spans 237 residues: Germination-specific N-acetylmuramoyl-L-alanine amidase (237 aa).

The signal sequence occupies residues 1-27 (MRKKLKWLSFLLGFIILLFLFKYQFSN). Positions 43-226 (IYLDPGHGGP…VASSIYKGIL (184 aa)) constitute a MurNAc-LAA domain.

It belongs to the N-acetylmuramoyl-L-alanine amidase 3 family.

It is found in the secreted. The enzyme catalyses Hydrolyzes the link between N-acetylmuramoyl residues and L-amino acid residues in certain cell-wall glycopeptides.. Functionally, cleaves the peptide side chain from the N-acetylmuramic acid residues in peptidoglycan. This is a step in the formation of muramic delta-lactam residues in spore cortex. This Bacillus subtilis (strain 168) protein is Germination-specific N-acetylmuramoyl-L-alanine amidase (cwlD).